The primary structure comprises 221 residues: Ribosomal RNA large subunit methyltransferase E (221 aa).

Glycine 60, tryptophan 62, aspartate 89, aspartate 105, and aspartate 134 together coordinate S-adenosyl-L-methionine. The active-site Proton acceptor is the lysine 174.

Belongs to the class I-like SAM-binding methyltransferase superfamily. RNA methyltransferase RlmE family.

It is found in the cytoplasm. It catalyses the reaction uridine(2552) in 23S rRNA + S-adenosyl-L-methionine = 2'-O-methyluridine(2552) in 23S rRNA + S-adenosyl-L-homocysteine + H(+). Functionally, specifically methylates the uridine in position 2552 of 23S rRNA at the 2'-O position of the ribose in the fully assembled 50S ribosomal subunit. This Cupriavidus taiwanensis (strain DSM 17343 / BCRC 17206 / CCUG 44338 / CIP 107171 / LMG 19424 / R1) (Ralstonia taiwanensis (strain LMG 19424)) protein is Ribosomal RNA large subunit methyltransferase E.